The primary structure comprises 512 residues: SWI/SNF complex subunit SWI3A (512 aa).

In terms of domain architecture, SWIRM spans 13–110 (YTIPAQSSWF…FSSSLKKNDH (98 aa)). Positions 223–274 (SAAAVWTEEEILLLLESVLKHGDDWELISQSVSTKSRLDCISKLIELPFGEF) constitute an SANT domain. Residues 291–325 (DENTEQVQTDGQEHEETETREEKEDRVNEDEPPAK) form a disordered region. Residues 424–488 (ALGAAAAQAK…IEGVKETIIQ (65 aa)) adopt a coiled-coil conformation.

In terms of assembly, homodimers and heterodimers. Interacts with SWI3B, SWI3C, BSH, and the C-terminus of FCA, but not with BRM or SWI3D. In terms of tissue distribution, expressed in roots, stems, leaves and flowers, but not in siliques.

It is found in the nucleus. In terms of biological role, component of a multiprotein complex equivalent of the SWI/SNF complex, an ATP-dependent chromatin-remodeling complex, which is required for the positive and negative regulation of gene expression of a large number of genes. It changes chromatin structure by altering DNA-histone contacts within a nucleosome, leading eventually to a change in nucleosome position, thus facilitating or repressing binding of gene-specific transcription factors. The protein is SWI/SNF complex subunit SWI3A (SWI3A) of Arabidopsis thaliana (Mouse-ear cress).